The following is a 110-amino-acid chain: Inner membrane protein YgiZ (110 aa).

Residues 1–8 (MLKQKIKT) are Cytoplasmic-facing. The helical transmembrane segment at 9 to 29 (IFEALLYIMLTYWLIDSFFAF) threads the bilayer. Residues 30–53 (NKYDWMLESGGNICSIPSVSGEDR) are Periplasmic-facing. A helical transmembrane segment spans residues 54–74 (ILQAMIAAFFLLTPLIILILR). The Cytoplasmic portion of the chain corresponds to 75-83 (KLFMREMFE). Residues 84–104 (FWVYVFSLGICLVCGWWLFWG) traverse the membrane as a helical segment. Topologically, residues 105–110 (RFIFCY) are periplasmic.

The protein localises to the cell inner membrane. This chain is Inner membrane protein YgiZ (ygiZ), found in Escherichia coli (strain K12).